A 216-amino-acid polypeptide reads, in one-letter code: Adenylate kinase (216 aa).

Residue 10 to 15 participates in ATP binding; that stretch reads GAGKGT. The interval 30–59 is NMP; the sequence is STGDIFRKNISENTPLGIEAKGYIDNGQLV. Residues Thr31, Arg36, 57-59, 85-88, and Gln92 contribute to the AMP site; these read QLV and GFPR. The LID stretch occupies residues 126–163; the sequence is GRRVCPSCGASYHVKFNPPTNEGKCDLCGSEVIQRKDD. Arg127 provides a ligand contact to ATP. Positions 130 and 133 each coordinate Zn(2+). Residue 136 to 137 coordinates ATP; it reads SY. The Zn(2+) site is built by Cys150 and Cys153. The AMP site is built by Arg160 and Arg171. Lys199 contacts ATP.

Belongs to the adenylate kinase family. As to quaternary structure, monomer.

The protein resides in the cytoplasm. The enzyme catalyses AMP + ATP = 2 ADP. It participates in purine metabolism; AMP biosynthesis via salvage pathway; AMP from ADP: step 1/1. Functionally, catalyzes the reversible transfer of the terminal phosphate group between ATP and AMP. Plays an important role in cellular energy homeostasis and in adenine nucleotide metabolism. The polypeptide is Adenylate kinase (Clostridium beijerinckii (strain ATCC 51743 / NCIMB 8052) (Clostridium acetobutylicum)).